We begin with the raw amino-acid sequence, 123 residues long: Small ribosomal subunit protein uS12 (123 aa).

A disordered region spans residues 1–24 (MPTINQLIRKERKKQVKKSKSPAL). Positions 10 to 20 (KERKKQVKKSK) are enriched in basic residues. D89 carries the post-translational modification 3-methylthioaspartic acid.

Belongs to the universal ribosomal protein uS12 family. As to quaternary structure, part of the 30S ribosomal subunit. Contacts proteins S8 and S17. May interact with IF1 in the 30S initiation complex.

In terms of biological role, with S4 and S5 plays an important role in translational accuracy. Interacts with and stabilizes bases of the 16S rRNA that are involved in tRNA selection in the A site and with the mRNA backbone. Located at the interface of the 30S and 50S subunits, it traverses the body of the 30S subunit contacting proteins on the other side and probably holding the rRNA structure together. The combined cluster of proteins S8, S12 and S17 appears to hold together the shoulder and platform of the 30S subunit. The polypeptide is Small ribosomal subunit protein uS12 (Sulfurovum sp. (strain NBC37-1)).